Reading from the N-terminus, the 243-residue chain is Probable aquaporin SIP1-2 (243 aa).

Helical transmembrane passes span 12-32 (VITF…AAIV) and 42-62 (WAPL…FTVI). An NPA 1 motif is present at residues 72-74 (NPC). Transmembrane regions (helical) follow at residues 90 to 110 (FSLA…AITI), 135 to 155 (GAIS…LIIL), and 162 to 182 (LAKT…GSKF). The NPA 2 motif lies at 188–190 (NPA). A helical membrane pass occupies residues 210–230 (VYWISSYTGAILSAMLFRIIF).

It belongs to the MIP/aquaporin (TC 1.A.8) family. SIP (TC 1.A.8.10) subfamily. Expressed in roots and above ground. Expressed in elongating regions of the root tips, cotyledons, minor veins and hydathode cells of the rosette leaves. Weakly expressed in vascular tissues of the flower petals, filaments of stamens, upper part of the styles and receptacles of the siliques.

It is found in the endoplasmic reticulum membrane. In terms of biological role, water channel required to facilitate the transport of water across cell membrane. The chain is Probable aquaporin SIP1-2 (SIP1-2) from Arabidopsis thaliana (Mouse-ear cress).